We begin with the raw amino-acid sequence, 260 residues long: tRNA pseudouridine synthase C (260 aa).

D54 is an active-site residue.

It belongs to the pseudouridine synthase RluA family.

The catalysed reaction is uridine(65) in tRNA = pseudouridine(65) in tRNA. Functionally, responsible for synthesis of pseudouridine from uracil-65 in transfer RNAs. This Escherichia coli O6:H1 (strain CFT073 / ATCC 700928 / UPEC) protein is tRNA pseudouridine synthase C (truC).